The following is a 648-amino-acid chain: RAF proto-oncogene serine/threonine-protein kinase (648 aa).

Phosphoserine; by MAPK1 is present on serine 29. Serine 43 is modified (phosphoserine). Residues 56 to 131 (NTIRVFLPNK…IGEELQVDFL (76 aa)) enclose the RBD domain. The Phorbol-ester/DAG-type zinc finger occupies 138-184 (THNFARKTFLKLAFCDICQKFLLNGFRCQTCGYKFHEHCSTKVPTMC). 8 residues coordinate Zn(2+): histidine 139, cysteine 152, cysteine 155, cysteine 165, cysteine 168, histidine 173, cysteine 176, and cysteine 184. The tract at residues 217 to 335 (MRESVSRMPA…EKNKIRPRGQ (119 aa)) is disordered. Serine 233 carries the phosphoserine; by PKA modification. The segment covering 239-271 (TFNTSSPSSEGSLSQRQRSTSTPNVHMVSTTLP) has biased composition (polar residues). A phosphoserine mark is found at serine 252 and serine 259. A Phosphothreonine; by autocatalysis modification is found at threonine 268. A Phosphothreonine; by PKA modification is found at threonine 269. Residues 275-285 (RMIEDAIRSHS) are compositionally biased toward basic and acidic residues. Over residues 286–301 (ESASPSALSSSPNNLS) the composition is skewed to low complexity. 3 positions are modified to phosphoserine; by MAPK1: serine 289, serine 296, and serine 301. An interaction with PEBP1/RKIP region spans residues 331-349 (RPRGQRDSSYYWEIEASEV). A Phosphoserine; by PAK1, PAK2, PAK3 and PAK5 modification is found at serine 338. Residue serine 339 is modified to Phosphoserine; by PAK1, PAK2 and PAK3. Phosphotyrosine; by SRC is present on residues tyrosine 340 and tyrosine 341. In terms of domain architecture, Protein kinase spans 349 to 609 (VMLSTRIGSG…PQILSSIELL (261 aa)). ATP is bound by residues 355-363 (IGSGSFGTV) and lysine 375. The active-site Proton acceptor is the aspartate 468. Position 471 is a phosphoserine (serine 471). Phosphothreonine is present on threonine 491. Serine 494 bears the Phosphoserine mark. 2 positions are modified to phosphoserine; by PKC: serine 497 and serine 499. Arginine 563 bears the Symmetric dimethylarginine; by PRMT5 mark. Phosphoserine is present on serine 621. At serine 642 the chain carries Phosphoserine; by MAPK1.

Belongs to the protein kinase superfamily. TKL Ser/Thr protein kinase family. RAF subfamily. Monomer. Homodimer. Heterodimerizes with BRAF and this heterodimer possesses a highly increased kinase activity compared to the respective homodimers or monomers. Heterodimerization is mitogen-regulated and enhanced by 14-3-3 proteins. MAPK1/ERK2 activation can induce a negative feedback that promotes the dissociation of the heterodimer. Forms a multiprotein complex with Ras (M-Ras/MRAS), SHOC2 and protein phosphatase 1 (PPP1CA, PPP1CB and PPP1CC). Interacts with LZTR1. Interacts with Ras proteins; the interaction is antagonized by RIN1. Weakly interacts with RIT1. Interacts with STK3/MST2; the interaction inhibits its pro-apoptotic activity. Interacts (when phosphorylated at Ser-259) with YWHAZ (unphosphorylated at 'Thr-232'). Interacts with MAP3K5/ASF1 (via N-terminus) and this interaction inhibits the proapoptotic function of MAP3K5/ASK1. Interacts with PAK1 (via kinase domain). The phosphorylated form interacts with PIN1. The Ser-338 and Ser-339 phosphorylated form (by PAK1) interacts with BCL2. Interacts with PEBP1/RKIP and this interaction is enhanced if RAF1 is phosphorylated on residues Ser-338, Ser-339, Tyr-340 and Tyr-341. Interacts with ADCY2, ADCY5, ADCY6, DGKH, RCAN1/DSCR1, PPP1R12A, PKB/AKT1, PPP2CA, PPP2R1B, SPRY2, SPRY4, CNKSR1/CNK1, KSR2 and PHB/prohibitin. Interacts with ROCK2. Interacts (via N-terminus) with RGS14 (via RBD domains); the interaction mediates the formation of a ternary complex with BRAF, a ternary complex inhibited by GNAI1. Probably forms a complex composed of chaperones HSP90 and HSP70, co-chaperones CDC37, PPP5C, TSC1 and client protein TSC2, CDK4, AKT, RAF1 and NR3C1; this complex does not contain co-chaperones STIP1/HOP and PTGES3/p23. Interacts with MAP2K1/MEK1 and MAP2K2/MEK2. In its active form, interacts with PRMT5. Interacts with FAM83B; displaces 14-3-3 proteins from RAF1 and activates RAF1. Interacts with PDE8A; the interaction promotes RAF1 activity. Interacts with MFHAS1. Interacts with GLS. Interacts with YWHAZ. Interacts with NEK10 and MAP2K1; the interaction is direct with NEK10 and required for ERK1/2-signaling pathway activation in response to UV irradiation. The cofactor is Zn(2+). Phosphorylation at Thr-269, Ser-338, Tyr-341, Thr-491 and Ser-494 results in its activation. Phosphorylation at Ser-29, Ser-43, Ser-289, Ser-296, Ser-301 and Ser-642 by MAPK1/ERK2 results in its inactivation. Phosphorylation at Ser-259 induces the interaction with YWHAZ and inactivates kinase activity. Dephosphorylation of Ser-259 by the SHOC2-MRAS-PP1c (SMP) complex consisting of SHOC2, GTP-bound M-Ras/MRAS and the catalytic subunit of protein phosphatase 1 (PPP1CA, PPP1CB or PPP1CC); this relieves inactivation and stimulates kinase activity. Phosphorylation at Ser-338 by PAK1 and PAK5 and Ser-339 by PAK1 is required for its mitochondrial localization. Phosphorylation at Ser-621 in response to growth factor treatment stabilizes the protein, possibly by preventing proteasomal degradation. Phosphorylation at Ser-289, Ser-296, Ser-301, Ser-338 and Ser-621 are somehow linked to the methylation potential of cells. Treatment of cells with HGF in the presence of the methylation inhibitor 5'-methylthioadenosine (MTA) results in increased phosphorylation at Ser-338 and Ser-621 and decreased phosphorylation at Ser-296, Ser-301 and Ser-338. Dephosphorylation at Ser-338 by PPP5C results in a decreased of activity. Post-translationally, methylated in response to EGF treatment. This modification leads to destabilization of the protein, possibly through proteasomal degradation.

The protein resides in the cytoplasm. Its subcellular location is the cell membrane. The protein localises to the mitochondrion. It is found in the nucleus. It carries out the reaction L-seryl-[protein] + ATP = O-phospho-L-seryl-[protein] + ADP + H(+). The enzyme catalyses L-threonyl-[protein] + ATP = O-phospho-L-threonyl-[protein] + ADP + H(+). With respect to regulation, regulation is a highly complex process involving membrane recruitment, protein-protein interactions, dimerization, and phosphorylation/dephosphorylation events. Ras-GTP recruits RAF1 to the membrane, thereby promoting its activation. The inactive conformation of RAF1 is maintained by autoinhibitory interactions occurring between the N-terminal regulatory and the C-terminal catalytic domains and by the binding of a 14-3-3 protein that contacts two phosphorylation sites, Ser-259 and Ser-621. Upon mitogenic stimulation, Ras and PPP2R1A cooperate to release autoinhibition and the subsequent phosphorylation of activating sites: Ser-338, Tyr-341, Thr-491, and Ser-494, yields a fully active kinase. Through a negative feedback mechanism involving MAPK1/ERK2, RAF1 is phosphorylated on Ser-29, Ser-43, Ser-289, Ser-296, Ser-301 and Ser-642 by MAPK1/ERK2, which yields an inactive, desensitized kinase. The signaling-competent conformation of RAF1 is finally re-established by the coordinated action of PIN1, a prolyl isomerase that converts pSer and pThr residues from the cis to the trans conformation, which is preferentially recognized and dephosphorylated by PPP2R1A. Activated by homodimerization and heterodimerization (with BRAF). Also regulated through association with other proteins such as KSR2, CNKSR1/CNK1, PEBP1/RKIP, PHB/prohibitin and SPRY4. PEBP1/RKIP acts by dissociating RAF1 from its substrates MAP2K1/MEK1 and MAP2K2/MEK2. PHB/prohibitin facilitates the displacement of 14-3-3 from RAF1 by activated Ras, thereby promoting cell membrane localization and phosphorylation of RAF1 at the activating Ser-338. SPRY4 inhibits Ras-independent, but not Ras-dependent, activation of RAF1. CNKSR1/CNK1 regulates Src-mediated RAF1 activation. Serine/threonine-protein kinase that acts as a regulatory link between the membrane-associated Ras GTPases and the MAPK/ERK cascade, and this critical regulatory link functions as a switch determining cell fate decisions including proliferation, differentiation, apoptosis, survival and oncogenic transformation. RAF1 activation initiates a mitogen-activated protein kinase (MAPK) cascade that comprises a sequential phosphorylation of the dual-specific MAPK kinases (MAP2K1/MEK1 and MAP2K2/MEK2) and the extracellular signal-regulated kinases (MAPK3/ERK1 and MAPK1/ERK2). The phosphorylated form of RAF1 (on residues Ser-338 and Ser-339, by PAK1) phosphorylates BAD/Bcl2-antagonist of cell death at 'Ser-75'. Phosphorylates adenylyl cyclases: ADCY2, ADCY5 and ADCY6, resulting in their activation. Phosphorylates PPP1R12A resulting in inhibition of the phosphatase activity. Can promote NF-kB activation and inhibit signal transducers involved in motility (ROCK2), apoptosis (MAP3K5/ASK1 and STK3/MST2), proliferation and angiogenesis (RB1). Can protect cells from apoptosis also by translocating to the mitochondria where it binds BCL2 and displaces BAD/Bcl2-antagonist of cell death. Regulates Rho signaling and migration, and is required for normal wound healing. Plays a role in the oncogenic transformation of epithelial cells via repression of the TJ protein, occludin (OCLN) by inducing the up-regulation of a transcriptional repressor SNAI2/SLUG, which induces down-regulation of OCLN. Restricts caspase activation in response to selected stimuli, notably Fas stimulation, pathogen-mediated macrophage apoptosis, and erythroid differentiation. Phosphorylates TNNT2/cardiac muscle troponin T. This Rattus norvegicus (Rat) protein is RAF proto-oncogene serine/threonine-protein kinase (Raf1).